The chain runs to 475 residues: Sulfate adenylyltransferase subunit 1 (475 aa).

The tr-type G domain occupies 25 to 239 (KSLLRFLTCG…EVLETVEIQR (215 aa)). The interval 34–41 (GSVDDGKS) is G1. 34–41 (GSVDDGKS) is a GTP binding site. Positions 92–96 (GITID) are G2. The tract at residues 113-116 (DTPG) is G3. Residues 113–117 (DTPGH) and 168–171 (NKMD) contribute to the GTP site. A G4 region spans residues 168–171 (NKMD). The tract at residues 206-208 (SAL) is G5.

It belongs to the TRAFAC class translation factor GTPase superfamily. Classic translation factor GTPase family. CysN/NodQ subfamily. Heterodimer composed of CysD, the smaller subunit, and CysN.

It catalyses the reaction sulfate + ATP + H(+) = adenosine 5'-phosphosulfate + diphosphate. It functions in the pathway sulfur metabolism; hydrogen sulfide biosynthesis; sulfite from sulfate: step 1/3. In terms of biological role, with CysD forms the ATP sulfurylase (ATPS) that catalyzes the adenylation of sulfate producing adenosine 5'-phosphosulfate (APS) and diphosphate, the first enzymatic step in sulfur assimilation pathway. APS synthesis involves the formation of a high-energy phosphoric-sulfuric acid anhydride bond driven by GTP hydrolysis by CysN coupled to ATP hydrolysis by CysD. The chain is Sulfate adenylyltransferase subunit 1 from Escherichia coli O9:H4 (strain HS).